We begin with the raw amino-acid sequence, 228 residues long: MRRGEVLKLGVVPYLEGKEIQLKAFEKVKKEETDGILILLQHKPVYTIGVSGGYDEDILVPIDYIKEKAELYKVERGGKITFHGPGQVVAYPIFNLAKWQKDVHLFVHNLEEAVIRLLREYGIIAGRKEKYTGVWVGDEKICAIGIAVKRWITWHGIALNVNTDLSYFGLINACGITEFGVTSMKKLGIEVEIEEVMDRLVDKFEEVFEIKFEEIDLTRLAVVDSAKA.

The BPL/LPL catalytic domain occupies 31–212; the sequence is EETDGILILL…KFEEVFEIKF (182 aa). Residues 76 to 83, 143 to 145, and 156 to 158 contribute to the substrate site; these read RGGKITFH, AIG, and GIA. The active-site Acyl-thioester intermediate is the C174.

Belongs to the LipB family.

Its subcellular location is the cytoplasm. It catalyses the reaction octanoyl-[ACP] + L-lysyl-[protein] = N(6)-octanoyl-L-lysyl-[protein] + holo-[ACP] + H(+). The protein operates within protein modification; protein lipoylation via endogenous pathway; protein N(6)-(lipoyl)lysine from octanoyl-[acyl-carrier-protein]: step 1/2. Functionally, catalyzes the transfer of endogenously produced octanoic acid from octanoyl-acyl-carrier-protein onto the lipoyl domains of lipoate-dependent enzymes. Lipoyl-ACP can also act as a substrate although octanoyl-ACP is likely to be the physiological substrate. The sequence is that of Octanoyltransferase from Caldanaerobacter subterraneus subsp. tengcongensis (strain DSM 15242 / JCM 11007 / NBRC 100824 / MB4) (Thermoanaerobacter tengcongensis).